The chain runs to 440 residues: Enolase (440 aa).

Substrate contacts are provided by His159 and Glu168. Glu211 functions as the Proton donor in the catalytic mechanism. Residues Asp245, Glu296, and Asp321 each contribute to the Mg(2+) site. Glu296 and Asp321 together coordinate substrate. Lys346 (proton acceptor) is an active-site residue. Substrate-binding positions include 373–376 and Lys397; that span reads SHRS.

Belongs to the enolase family. As to quaternary structure, homodimer. Requires Mg(2+) as cofactor.

The protein resides in the cytoplasm. The enzyme catalyses (2R)-2-phosphoglycerate = phosphoenolpyruvate + H2O. Its pathway is carbohydrate degradation; glycolysis; pyruvate from D-glyceraldehyde 3-phosphate: step 4/5. The protein is Enolase (eno-1) of Tuber borchii (White truffle).